The primary structure comprises 1157 residues: ATP-dependent helicase/deoxyribonuclease subunit B (1157 aa).

One can recognise a UvrD-like helicase ATP-binding domain in the interval 1–278 (MTLQIIAGRS…FFLENKRAKT (278 aa)). 8 to 15 (GRSGTGKT) provides a ligand contact to ATP. The UvrD-like helicase C-terminal domain maps to 272–590 (ENKRAKTESL…VLSDMENAKL (319 aa)). Residues Cys794, Cys1115, Cys1118, and Cys1124 each contribute to the [4Fe-4S] cluster site.

Belongs to the helicase family. AddB/RexB type 1 subfamily. As to quaternary structure, heterodimer of AddA and AddB. Mg(2+) serves as cofactor. Requires [4Fe-4S] cluster as cofactor.

The heterodimer acts as both an ATP-dependent DNA helicase and an ATP-dependent, dual-direction single-stranded exonuclease. Recognizes the chi site generating a DNA molecule suitable for the initiation of homologous recombination. The AddB subunit has 5' -&gt; 3' nuclease activity but not helicase activity. The chain is ATP-dependent helicase/deoxyribonuclease subunit B from Listeria monocytogenes serotype 4a (strain HCC23).